Consider the following 418-residue polypeptide: MTVTIENIHAREIFDSRGNPTVEVDVRLTDGTLGRAAVPSGASTGDREAVELRDGGARLQGKDVSKAVANVNGEIYEALKGQSPFNQAKLDHLMIELDGTKNKSRLGANAILGVSMAIARAAANSEKIPLYRYLGGVDLELPQPFFNVINGGVHADSGIDVQEFLITPVKRASFRDGLEKIANIYHTLKKILADKGLETAVGDEGGFAPKLGSTENAIATLYQAIERAGYVPGEEIAIAIDPASSEFYDDKEKVYHFEGQKLTSAELLTYYEGLVEKYPALISIEDGFSEHDWAGFAAQTKVQGQKIQLVGDDIFVTNPEIFKEGIQKGVANAILIKLNQIGTVTEAIEAISLARKAGYKTMISHRSGETVDSFIADFAVAMHAGQIKTGSMARSERVEKYNQFLRIEEELLGLEVTK.

Glutamine 162 provides a ligand contact to (2R)-2-phosphoglycerate. Glutamate 204 functions as the Proton donor in the catalytic mechanism. Positions 241, 285, and 312 each coordinate Mg(2+). The (2R)-2-phosphoglycerate site is built by lysine 337, arginine 366, serine 367, and lysine 388. Lysine 337 acts as the Proton acceptor in catalysis.

The protein belongs to the enolase family. Requires Mg(2+) as cofactor.

The protein localises to the cytoplasm. It is found in the secreted. The protein resides in the cell surface. It catalyses the reaction (2R)-2-phosphoglycerate = phosphoenolpyruvate + H2O. The protein operates within carbohydrate degradation; glycolysis; pyruvate from D-glyceraldehyde 3-phosphate: step 4/5. In terms of biological role, catalyzes the reversible conversion of 2-phosphoglycerate (2-PG) into phosphoenolpyruvate (PEP). It is essential for the degradation of carbohydrates via glycolysis. This Lactococcus lactis subsp. cremoris (strain SK11) protein is Enolase 1.